A 309-amino-acid polypeptide reads, in one-letter code: Putative rhizopine-binding protein (309 aa).

The N-terminal stretch at 1-20 (MKKFIIGIAAAVLVSTAAHA) is a signal peptide.

It belongs to the bacterial solute-binding protein 2 family.

The protein localises to the periplasm. Its function is as follows. Involved in rhizopine (L-3-O-methyl-scyllo-inosamine) catabolism. Could be involved in its high affinity transport. This is Putative rhizopine-binding protein (mocB) from Rhizobium meliloti (Ensifer meliloti).